Here is a 418-residue protein sequence, read N- to C-terminus: CCA-adding enzyme (418 aa).

ATP contacts are provided by S54 and R57. Residues S54 and R57 each contribute to the CTP site. 3 residues coordinate Mg(2+): D66, D68, and D118. H141, K161, and Y170 together coordinate ATP. CTP is bound by residues H141, K161, and Y170.

It belongs to the tRNA nucleotidyltransferase/poly(A) polymerase family. Archaeal CCA-adding enzyme subfamily. As to quaternary structure, homodimer. Requires Mg(2+) as cofactor.

The enzyme catalyses a tRNA precursor + 2 CTP + ATP = a tRNA with a 3' CCA end + 3 diphosphate. It carries out the reaction a tRNA with a 3' CCA end + 2 CTP + ATP = a tRNA with a 3' CCACCA end + 3 diphosphate. Its function is as follows. Catalyzes the addition and repair of the essential 3'-terminal CCA sequence in tRNAs without using a nucleic acid template. Adds these three nucleotides in the order of C, C, and A to the tRNA nucleotide-73, using CTP and ATP as substrates and producing inorganic pyrophosphate. tRNA 3'-terminal CCA addition is required both for tRNA processing and repair. Also involved in tRNA surveillance by mediating tandem CCA addition to generate a CCACCA at the 3' terminus of unstable tRNAs. While stable tRNAs receive only 3'-terminal CCA, unstable tRNAs are marked with CCACCA and rapidly degraded. This is CCA-adding enzyme from Pyrobaculum islandicum (strain DSM 4184 / JCM 9189 / GEO3).